A 436-amino-acid chain; its full sequence is MVLPTVAIVGRPNVGKSTLFNRIAGERISIVEDVEGVTRDRIYATGEWLNRQFSLIDTGGIDDVDAPFMEQIKHQAQIAMEEADVIVFVVSGKEGVTDADEYVSKILYRTNTPVILAVNKVDNPEMRNDIYDFYSLGLGDPYPVSSVHGIGTGDVLDEIVENLPVEEAEENDDIIRFSLIGRPNVGKSSLINAILGEDRVIASPVAGTTRDAIDTHFTDADGQEFTMIDTAGMRKSGKIYENTEKYSVMRAMRAIDRSDVVLMVINAEEGIREYDKRIAGFAHEAGKGMIIVVNKWDTIDKDNHTVAKWEADIRDQFQFLTYAPIIFVSALTKQRLNKLPDLIKRISESQNKRIPSAVLNDVIMDAIAINPTPTDKGKRLKIFYATQVSVKPPTFVVFVNEEELMHFSYLRFLENQIRAAFTFEGTPIHLIARKRK.

2 EngA-type G domains span residues proline 4–glutamate 167 and isoleucine 175–asparagine 351. GTP-binding positions include glycine 10–serine 17, aspartate 57–isoleucine 61, asparagine 119–aspartate 122, glycine 181–serine 188, aspartate 229–methionine 233, and asparagine 294–aspartate 297. In terms of domain architecture, KH-like spans lysine 352–lysine 436.

Belongs to the TRAFAC class TrmE-Era-EngA-EngB-Septin-like GTPase superfamily. EngA (Der) GTPase family. As to quaternary structure, associates with the 50S ribosomal subunit.

GTPase that plays an essential role in the late steps of ribosome biogenesis. This chain is GTPase Der, found in Streptococcus pyogenes serotype M28 (strain MGAS6180).